Here is a 332-residue protein sequence, read N- to C-terminus: Galactinol synthase 7 (332 aa).

The active site involves Lys101. Residues Asp117, Asp119, and His255 each contribute to the Mn(2+) site.

It belongs to the glycosyltransferase 8 family. Galactosyltransferase subfamily. A divalent metal cation is required as a cofactor.

It is found in the cytoplasm. The catalysed reaction is myo-inositol + UDP-alpha-D-galactose = alpha-D-galactosyl-(1-&gt;3)-1D-myo-inositol + UDP + H(+). Functionally, galactinol synthase involved in the biosynthesis of raffinose family oligosaccharides (RFOs) that function as osmoprotectants. May promote plant stress tolerance. The sequence is that of Galactinol synthase 7 (GOLS7) from Arabidopsis thaliana (Mouse-ear cress).